A 281-amino-acid polypeptide reads, in one-letter code: Pantothenate synthetase (281 aa).

ATP is bound at residue M17 to H24. H24 (proton donor) is an active-site residue. Q48 is a (R)-pantoate binding site. Q48 contacts beta-alanine. G134–D137 is an ATP binding site. A (R)-pantoate-binding site is contributed by Q140. ATP-binding positions include V163 and L176–R179.

This sequence belongs to the pantothenate synthetase family. Homodimer.

Its subcellular location is the cytoplasm. It catalyses the reaction (R)-pantoate + beta-alanine + ATP = (R)-pantothenate + AMP + diphosphate + H(+). It functions in the pathway cofactor biosynthesis; (R)-pantothenate biosynthesis; (R)-pantothenate from (R)-pantoate and beta-alanine: step 1/1. Catalyzes the condensation of pantoate with beta-alanine in an ATP-dependent reaction via a pantoyl-adenylate intermediate. The chain is Pantothenate synthetase from Deinococcus radiodurans (strain ATCC 13939 / DSM 20539 / JCM 16871 / CCUG 27074 / LMG 4051 / NBRC 15346 / NCIMB 9279 / VKM B-1422 / R1).